The sequence spans 425 residues: Succinyl-diaminopimelate desuccinylase (425 aa).

Residue His-96 participates in Zn(2+) binding. The active site involves Asp-98. Asp-129 serves as a coordination point for Zn(2+). Residue Glu-163 is the Proton acceptor of the active site. Positions 164, 192, and 378 each coordinate Zn(2+).

The protein belongs to the peptidase M20A family. DapE subfamily. Homodimer. The cofactor is Zn(2+). Co(2+) serves as cofactor.

It carries out the reaction N-succinyl-(2S,6S)-2,6-diaminopimelate + H2O = (2S,6S)-2,6-diaminopimelate + succinate. The protein operates within amino-acid biosynthesis; L-lysine biosynthesis via DAP pathway; LL-2,6-diaminopimelate from (S)-tetrahydrodipicolinate (succinylase route): step 3/3. Catalyzes the hydrolysis of N-succinyl-L,L-diaminopimelic acid (SDAP), forming succinate and LL-2,6-diaminopimelate (DAP), an intermediate involved in the bacterial biosynthesis of lysine and meso-diaminopimelic acid, an essential component of bacterial cell walls. In Polaromonas sp. (strain JS666 / ATCC BAA-500), this protein is Succinyl-diaminopimelate desuccinylase.